The sequence spans 484 residues: Sperm motility kinase 2B (484 aa).

In terms of domain architecture, Protein kinase spans 8-256 (YVMLETIGHG…VAEVMVHPWV (249 aa)). Residues 14–22 (IGHGGCSKV) and Lys37 each bind ATP. The active-site Proton acceptor is the Asp127. One can recognise a UBA domain in the interval 272 to 314 (PLKPNPAIVKAMGYIGFQAQDIEDSLRQRKFNETMASYCLLKK). Polar residues-rich tracts occupy residues 356-373 (PTSL…CGRS) and 422-434 (SSDD…TSAS). Disordered stretches follow at residues 356 to 400 (PTSL…TMDH) and 422 to 450 (SSDD…RGIK).

Belongs to the protein kinase superfamily. CAMK Ser/Thr protein kinase family. Smok subfamily. As to expression, testis-specific. Expressed in the testis from 22 days postpartum (22 dpp).

The enzyme catalyses L-seryl-[protein] + ATP = O-phospho-L-seryl-[protein] + ADP + H(+). It carries out the reaction L-threonyl-[protein] + ATP = O-phospho-L-threonyl-[protein] + ADP + H(+). In terms of biological role, may play a role in sperm motility, especially in the regulation of flagellar function. This chain is Sperm motility kinase 2B, found in Mus musculus (Mouse).